The primary structure comprises 140 residues: Large ribosomal subunit protein uL11 (140 aa).

It belongs to the universal ribosomal protein uL11 family. In terms of assembly, part of the ribosomal stalk of the 50S ribosomal subunit. Interacts with L10 and the large rRNA to form the base of the stalk. L10 forms an elongated spine to which L12 dimers bind in a sequential fashion forming a multimeric L10(L12)X complex. Post-translationally, one or more lysine residues are methylated.

Its function is as follows. Forms part of the ribosomal stalk which helps the ribosome interact with GTP-bound translation factors. The sequence is that of Large ribosomal subunit protein uL11 from Staphylococcus carnosus (strain TM300).